We begin with the raw amino-acid sequence, 142 residues long: Large ribosomal subunit protein uL13 (142 aa).

The protein belongs to the universal ribosomal protein uL13 family. As to quaternary structure, part of the 50S ribosomal subunit.

Functionally, this protein is one of the early assembly proteins of the 50S ribosomal subunit, although it is not seen to bind rRNA by itself. It is important during the early stages of 50S assembly. The polypeptide is Large ribosomal subunit protein uL13 (Edwardsiella ictaluri (strain 93-146)).